A 568-amino-acid polypeptide reads, in one-letter code: MGGCCSCLKESQDDATVLPIAENEREAVTSLLGYLEDKDNYDFYSGGPLKALTTLVYSDNLNLQRSAALAFAEITEKYVRPVDREVLEPILILLQSHDPQIQIAACAALGNLAVNNENKILIVEMGGLEPLIEQMKSNNVEVQCNAVGCITNLATQDDNKAKIAHSGALVPLTKLAKSKNIRVQRNATGALLNMTHSGENRKELVDAGAVPVLVSLLSSSDADVQYYCTTALSNIAVDESNRRKLSQTEPRLVSKLVVLTDSPSARVKCQATLALRNLASDTGYQLEIVRAGGLSHLVKLIQCNSMPLVLASVACIRNISIHPLNEGLIVDAGFLKPLVKLLDYNDNEEIQCHAVSTLRNLAASSEKNRQEFFESGAVEKCKQLALVSPISVQSEISACFAILALADNSKLELLDANILEALIPMTFSTNQEVAGNAAAALANLCSRINNYEKIIESWTEPSKGVCGFLIRFLQSEYPTFEHIALWTILQLLESHNETMLGLIKSNKEIVKSIKRLSDINYENAQKASSLHSRLQQVNGGSVASGSEQYEHASLELYNITQQIMQFLN.

Gly2 carries N-myristoyl glycine lipidation. 3 S-palmitoyl cysteine lipidation sites follow: Cys4, Cys5, and Cys7. ARM repeat units follow at residues 37-74, 75-114, 116-155, 157-196, 198-237, 241-280, 282-321, 323-363, and 407-446; these read DKDN…FAEI, TEKY…NLAV, NENK…NLAT, DDNK…NMTH, GENR…NIAV, NRRK…NLAS, TGYQ…NISI, PLNE…NLAA, and DNSK…NLCS.

Belongs to the beta-catenin family.

Its subcellular location is the vacuole membrane. In terms of biological role, functions in both vacuole inheritance and protein targeting from the cytoplasm to vacuole. This chain is Vacuolar protein 8 (VAC8), found in Eremothecium gossypii (strain ATCC 10895 / CBS 109.51 / FGSC 9923 / NRRL Y-1056) (Yeast).